A 147-amino-acid chain; its full sequence is Diaminohydroxyphosphoribosylamino-pyrimidine deaminase (147 aa).

The region spanning 1 to 123 (MNDIFYMKRA…YLKKHGICVK (123 aa)) is the CMP/dCMP-type deaminase domain. His50 contacts Zn(2+). Residue Glu52 is the Proton donor of the active site. Residues Cys75 and Cys84 each coordinate Zn(2+).

Belongs to the cytidine and deoxycytidylate deaminase family. Zn(2+) is required as a cofactor.

The catalysed reaction is 2,5-diamino-6-hydroxy-4-(5-phosphoribosylamino)-pyrimidine + H2O + H(+) = 5-amino-6-(5-phospho-D-ribosylamino)uracil + NH4(+). The protein operates within cofactor biosynthesis; riboflavin biosynthesis; 5-amino-6-(D-ribitylamino)uracil from GTP: step 2/4. The protein is Diaminohydroxyphosphoribosylamino-pyrimidine deaminase (ribD1) of Buchnera aphidicola subsp. Acyrthosiphon pisum (strain APS) (Acyrthosiphon pisum symbiotic bacterium).